A 299-amino-acid chain; its full sequence is 4-hydroxybenzoate octaprenyltransferase (299 aa).

8 helical membrane passes run 33–53 (VGFL…ADGV), 56–76 (WWTL…GCVI), 107–127 (LLMF…MNQL), 151–171 (LPQV…FAAI), 180–200 (WLLY…YAMV), 213–233 (IAIL…TLML), 247–267 (HTYW…FIIA), and 278–298 (AFMH…LATT).

This sequence belongs to the UbiA prenyltransferase family. It depends on Mg(2+) as a cofactor.

The protein localises to the cell inner membrane. It carries out the reaction all-trans-octaprenyl diphosphate + 4-hydroxybenzoate = 4-hydroxy-3-(all-trans-octaprenyl)benzoate + diphosphate. Its pathway is cofactor biosynthesis; ubiquinone biosynthesis. Catalyzes the prenylation of para-hydroxybenzoate (PHB) with an all-trans polyprenyl group. Mediates the second step in the final reaction sequence of ubiquinone-8 (UQ-8) biosynthesis, which is the condensation of the polyisoprenoid side chain with PHB, generating the first membrane-bound Q intermediate 3-octaprenyl-4-hydroxybenzoate. This Xylella fastidiosa (strain M12) protein is 4-hydroxybenzoate octaprenyltransferase.